Consider the following 736-residue polypeptide: 1,4-alpha-glucan branching enzyme GlgB (736 aa).

Aspartate 419 (nucleophile) is an active-site residue. Glutamate 472 serves as the catalytic Proton donor.

Belongs to the glycosyl hydrolase 13 family. GlgB subfamily. As to quaternary structure, monomer.

It catalyses the reaction Transfers a segment of a (1-&gt;4)-alpha-D-glucan chain to a primary hydroxy group in a similar glucan chain.. It participates in glycan biosynthesis; glycogen biosynthesis. In terms of biological role, catalyzes the formation of the alpha-1,6-glucosidic linkages in glycogen by scission of a 1,4-alpha-linked oligosaccharide from growing alpha-1,4-glucan chains and the subsequent attachment of the oligosaccharide to the alpha-1,6 position. The protein is 1,4-alpha-glucan branching enzyme GlgB of Rhizobium meliloti (strain 1021) (Ensifer meliloti).